A 660-amino-acid polypeptide reads, in one-letter code: MLVCYSVLACEILWDLPCSIMGSPLGHFTWDKYLKETCSVPAPVHCFKQSYTPPSNEFKISMKLEAQDPRNTTSTCIATVVGLTGARLRLRLDGSDNKNDFWRLVDSAEIQPIGNCEKNGGMLQPPLGFRLNASSWPMFLLKTLNGAEMAPIRIFHKEPPSPSHNFFKMGMKLEAVDRKNPHFICPATIGEVRGSEVLVTFDGWRGAFDYWCRFDSRDIFPVGWCSLTGDNLQPPGTKVVIPKNPYPASDVNTEKPSIHSSTKTVLEHQPGQRGRKPGKKRGRTPKTLISHPISAPSKTAEPLKFPKKRGPKPGSKRKPRTLLNPPPASPTTSTPEPDTSTVPQDAATIPSSAMQAPTVCIYLNKNGSTGPHLDKKKVQQLPDHFGPARASVVLQQAVQACIDCAYHQKTVFSFLKQGHGGEVISAVFDREQHTLNLPAVNSITYVLRFLEKLCHNLRSDNLFGNQPFTQTHLSLTAIEYSHSHDRYLPGETFVLGNSLARSLEPHSDSMDSASNPTNLVSTSQRHRPLLSSCGLPPSTASAVRRLCSRGVLKGSNERRDMESFWKLNRSPGSDRYLESRDASRLSGRDPSSWTVEDVMQFVREADPQLGPHADLFRKHEIDGKALLLLRSDMMMKYMGLKLGPALKLSYHIDRLKQGKF.

MBT repeat units lie at residues 28 to 126 (FTWD…LQPP) and 134 to 235 (SSWP…LQPP). Residues 233–345 (QPPGTKVVIP…EPDTSTVPQD (113 aa)) are disordered. Basic residues-rich tracts occupy residues 273 to 284 (RGRKPGKKRGRT) and 305 to 320 (FPKKRGPKPGSKRKPR). Low complexity predominate over residues 330 to 343 (PTTSTPEPDTSTVP). The SAM domain maps to 593 to 658 (WTVEDVMQFV…SYHIDRLKQG (66 aa)).

The protein belongs to the SCM family. In terms of assembly, interacts with the SAM domain of PHC1 via its SAM domain in vitro. Associates with a PRC1-like complex. As to expression, strongly expressed in heart, muscle and pancreas. Weakly expressed in brain, placenta, lung, liver and kidney.

The protein resides in the nucleus. Associates with Polycomb group (PcG) multiprotein complexes; the complex class is required to maintain the transcriptionally repressive state of some genes. This chain is Polycomb protein SCMH1, found in Homo sapiens (Human).